The following is a 156-amino-acid chain: 6,7-dimethyl-8-ribityllumazine synthase (156 aa).

5-amino-6-(D-ribitylamino)uracil contacts are provided by residues phenylalanine 25, 59 to 61 (AFE), and 83 to 85 (AVI). 88–89 (AT) serves as a coordination point for (2S)-2-hydroxy-3-oxobutyl phosphate. Histidine 91 acts as the Proton donor in catalysis. Residue phenylalanine 116 participates in 5-amino-6-(D-ribitylamino)uracil binding. A (2S)-2-hydroxy-3-oxobutyl phosphate-binding site is contributed by arginine 130.

Belongs to the DMRL synthase family.

It carries out the reaction (2S)-2-hydroxy-3-oxobutyl phosphate + 5-amino-6-(D-ribitylamino)uracil = 6,7-dimethyl-8-(1-D-ribityl)lumazine + phosphate + 2 H2O + H(+). It functions in the pathway cofactor biosynthesis; riboflavin biosynthesis; riboflavin from 2-hydroxy-3-oxobutyl phosphate and 5-amino-6-(D-ribitylamino)uracil: step 1/2. Catalyzes the formation of 6,7-dimethyl-8-ribityllumazine by condensation of 5-amino-6-(D-ribitylamino)uracil with 3,4-dihydroxy-2-butanone 4-phosphate. This is the penultimate step in the biosynthesis of riboflavin. In Nitratidesulfovibrio vulgaris (strain ATCC 29579 / DSM 644 / CCUG 34227 / NCIMB 8303 / VKM B-1760 / Hildenborough) (Desulfovibrio vulgaris), this protein is 6,7-dimethyl-8-ribityllumazine synthase.